The sequence spans 204 residues: Paraneoplastic antigen-like protein 8C (204 aa).

Residues 135–204 (PPATGPRELP…RRHHASDKKL (70 aa)) form a disordered region. Positions 182–204 (VGKRGKRKNKKNRRRHHASDKKL) are enriched in basic residues.

It belongs to the PNMA family.

This is Paraneoplastic antigen-like protein 8C from Homo sapiens (Human).